The chain runs to 275 residues: Exosome complex component Rrp42 (275 aa).

Belongs to the RNase PH family. Rrp42 subfamily. In terms of assembly, component of the archaeal exosome complex. Forms a hexameric ring-like arrangement composed of 3 Rrp41-Rrp42 heterodimers. The hexameric ring associates with a trimer of Rrp4 and/or Csl4 subunits.

It is found in the cytoplasm. Functionally, non-catalytic component of the exosome, which is a complex involved in RNA degradation. Contributes to the structuring of the Rrp41 active site. The sequence is that of Exosome complex component Rrp42 from Saccharolobus islandicus (strain L.S.2.15 / Lassen #1) (Sulfolobus islandicus).